A 360-amino-acid polypeptide reads, in one-letter code: Decorin (360 aa).

An N-terminal signal peptide occupies residues 1-16 (MKATIIFLLLAQVSWA). Residues 17–30 (GPFQQRGLFDFMLE) constitute a propeptide that is removed on maturation. The O-linked (Xyl...) (glycosaminoglycan) serine glycan is linked to Ser-34. 2 disulfide bridges follow: Cys-55-Cys-61 and Cys-59-Cys-68. LRR repeat units follow at residues 74 to 94 (DKVPKDLPPDTTLLDLQNNKI), 95 to 118 (TEIKDGDFKNLKNLHTLILVNNKI), 119 to 142 (SKISPGAFTPLLKLERLYLSKNHL), 143 to 163 (KELPEKMPKTLQELRAHENEI), 164 to 187 (TKVRKAVFNGLNQMIVVELGTNPL), 188 to 213 (KSSGIENGAFQGMKKLSYIRIADTNI), 214 to 234 (TTIPQGLPPSLTELHLEGNKI), 235 to 258 (TKVDASSLKGLNNLAKLGLSFNSI), 259 to 282 (SAVDNGTLANTPHLRELHLDNNKL), 283 to 305 (IRVPGGLAEHKYIQVVYLHNNNI), 306 to 335 (SAVGSNDFCPPGYNTKKASYSGVSLFSNPV), and 336 to 360 (QYWEIQPSTFRCVYVRSAIQLGNYK). Asn-212 is a glycosylation site (N-linked (GlcNAc...) asparagine). 2 N-linked (GlcNAc...) asparagine glycosylation sites follow: Asn-263 and Asn-304. Cys-314 and Cys-347 are joined by a disulfide.

It belongs to the small leucine-rich proteoglycan (SLRP) family. SLRP class I subfamily. As to quaternary structure, binds to type I and type II collagen, fibronectin and TGF-beta. Forms a ternary complex with MFAP2 and ELN. Interacts with DPT. The attached glycosaminoglycan chain can be either chondroitin sulfate or dermatan sulfate depending upon the tissue of origin.

It is found in the secreted. It localises to the extracellular space. Its subcellular location is the extracellular matrix. May affect the rate of fibrils formation. This is Decorin (DCN) from Canis lupus familiaris (Dog).